The sequence spans 135 residues: Large ribosomal subunit protein bL17 (135 aa).

The protein belongs to the bacterial ribosomal protein bL17 family. As to quaternary structure, part of the 50S ribosomal subunit. Contacts protein L32.

The chain is Large ribosomal subunit protein bL17 from Listeria innocua serovar 6a (strain ATCC BAA-680 / CLIP 11262).